The sequence spans 291 residues: Ribosomal large subunit pseudouridine synthase B (291 aa).

In terms of domain architecture, S4 RNA-binding spans 3-63 (EKLQKVLARA…GHLISVKESA (61 aa)). Aspartate 110 functions as the Nucleophile in the catalytic mechanism. The tract at residues 272-291 (VKRHSQIAGGRRSGGRNNNG) is disordered.

This sequence belongs to the pseudouridine synthase RsuA family.

The catalysed reaction is uridine(2605) in 23S rRNA = pseudouridine(2605) in 23S rRNA. Its function is as follows. Responsible for synthesis of pseudouridine from uracil-2605 in 23S ribosomal RNA. This chain is Ribosomal large subunit pseudouridine synthase B (rluB), found in Salmonella typhi.